Consider the following 238-residue polypeptide: Lactate utilization protein A (238 aa).

This sequence belongs to the LutA/YkgE family.

Its function is as follows. Is involved in L-lactate degradation and allows cells to grow with lactate as the sole carbon source. The chain is Lactate utilization protein A from Bacillus velezensis (strain DSM 23117 / BGSC 10A6 / LMG 26770 / FZB42) (Bacillus amyloliquefaciens subsp. plantarum).